The chain runs to 518 residues: Wax ester synthase/diacylglycerol acyltransferase 6 (518 aa).

The segment covering 1–17 has biased composition (basic and acidic residues); the sequence is MEIKTRRDTSETSVRKD. The tract at residues 1–29 is disordered; it reads MEIKTRRDTSETSVRKDDEEEVEEEQPLS. Over 1–213 the chain is Cytoplasmic; it reads MEIKTRRDTS…LMAGSRGDSR (213 aa). Histidine 163 (proton acceptor) is an active-site residue. A disordered region spans residues 185–205; that stretch reads PDELPSLPNQNRSSSRSSRLM. Residues 214–234 traverse the membrane as a helical segment; sequence FLWLVMVIWSAIMLVLNTVCD. The Lumenal segment spans residues 235–518; that stretch reads ALEFIATTMF…VQERDSRSLD (284 aa). Residue asparagine 430 is glycosylated (N-linked (GlcNAc...) asparagine).

It in the N-terminal section; belongs to the long-chain O-acyltransferase family. In terms of tissue distribution, expressed in roots, stems, leaves, flowers and siliques.

It is found in the cell membrane. The protein resides in the endoplasmic reticulum membrane. The protein localises to the golgi apparatus membrane. It carries out the reaction an acyl-CoA + a 1,2-diacyl-sn-glycerol = a triacyl-sn-glycerol + CoA. It catalyses the reaction a long chain fatty alcohol + a fatty acyl-CoA = a wax ester + CoA. It participates in glycerolipid metabolism; triacylglycerol biosynthesis. Its pathway is lipid metabolism. Bifunctional wax ester synthase/diacylglycerol acyltransferase that uses acyl-CoAs with 16, 18 and 20 carbons as substrates, preferably in combination with 16:0ol alcohol. Involved in cuticular wax biosynthesis. The polypeptide is Wax ester synthase/diacylglycerol acyltransferase 6 (Arabidopsis thaliana (Mouse-ear cress)).